Consider the following 204-residue polypeptide: ATP-dependent Clp protease proteolytic subunit (204 aa).

Serine 102 acts as the Nucleophile in catalysis. The active site involves histidine 127.

This sequence belongs to the peptidase S14 family. As to quaternary structure, fourteen ClpP subunits assemble into 2 heptameric rings which stack back to back to give a disk-like structure with a central cavity, resembling the structure of eukaryotic proteasomes.

The protein localises to the cytoplasm. The catalysed reaction is Hydrolysis of proteins to small peptides in the presence of ATP and magnesium. alpha-casein is the usual test substrate. In the absence of ATP, only oligopeptides shorter than five residues are hydrolyzed (such as succinyl-Leu-Tyr-|-NHMec, and Leu-Tyr-Leu-|-Tyr-Trp, in which cleavage of the -Tyr-|-Leu- and -Tyr-|-Trp bonds also occurs).. In terms of biological role, cleaves peptides in various proteins in a process that requires ATP hydrolysis. Has a chymotrypsin-like activity. Plays a major role in the degradation of misfolded proteins. This chain is ATP-dependent Clp protease proteolytic subunit, found in Neisseria gonorrhoeae (strain ATCC 700825 / FA 1090).